Consider the following 130-residue polypeptide: Small ribosomal subunit protein uS11c (130 aa).

Belongs to the universal ribosomal protein uS11 family. As to quaternary structure, part of the 30S ribosomal subunit.

It localises to the plastid. The protein resides in the chloroplast. This chain is Small ribosomal subunit protein uS11c, found in Trieres chinensis (Marine centric diatom).